Here is a 438-residue protein sequence, read N- to C-terminus: 23S rRNA (uracil(1939)-C(5))-methyltransferase RlmD (438 aa).

The region spanning R10–R68 is the TRAM domain. C81, C87, C90, and C168 together coordinate [4Fe-4S] cluster. S-adenosyl-L-methionine-binding residues include Q271, F300, N305, E321, N348, and D369. C395 functions as the Nucleophile in the catalytic mechanism.

This sequence belongs to the class I-like SAM-binding methyltransferase superfamily. RNA M5U methyltransferase family. RlmD subfamily.

It catalyses the reaction uridine(1939) in 23S rRNA + S-adenosyl-L-methionine = 5-methyluridine(1939) in 23S rRNA + S-adenosyl-L-homocysteine + H(+). Its function is as follows. Catalyzes the formation of 5-methyl-uridine at position 1939 (m5U1939) in 23S rRNA. The polypeptide is 23S rRNA (uracil(1939)-C(5))-methyltransferase RlmD (Erwinia tasmaniensis (strain DSM 17950 / CFBP 7177 / CIP 109463 / NCPPB 4357 / Et1/99)).